Here is a 295-residue protein sequence, read N- to C-terminus: Movement protein (295 aa).

Positions Lys256–Arg295 are disordered. Positions Thr266–Val281 are enriched in polar residues.

Belongs to the bromovirus movement protein family.

The protein localises to the host cell junction. It localises to the host plasmodesma. In terms of biological role, transports viral genome to neighboring plant cells directly through plasmosdesmata, without any budding. The movement protein allows efficient cell to cell propagation, by bypassing the host cell wall barrier. Acts by forming a tubular structure at the host plasmodesmata, enlarging it enough to allow free passage of virion capsids. This is Movement protein from Broad bean mottle virus.